Consider the following 368-residue polypeptide: MGIHDLSKVIADKAPDAIKETEIKNLFDRKVAIDASMSIYQFLIAIRSEGSNLVNEAGEATSHLSGLFYRTIRMVNHGIKPLYVFDGKPPTMKSGELLKRGARRKEAQANLEEATEQGDTEQMEKFSRRLVHVTREHNEQCRQLLTLMGIPFIIAPTEAEAQCAELVKGGKVFATATEDMDALTFGTTVLLRHMTFSEARKMPIQEFRLQKGGLEMSMEEFIDMCILLGCDYCDSIKGIGRQKAYQLIKEHKNIETVLKHLDPKKYVIPEDWHFAEARELFLRPDVTPAAECEFKWTTPDIDGLVKFMCQENGFAEDRIRKSAEKLVKARKGGQQGRLDSFFTAIPSGSAKRNTVGLLPKPGPPPFLF.

The N-domain stretch occupies residues 1 to 104; the sequence is MGIHDLSKVI…GELLKRGARR (104 aa). Aspartate 34 lines the Mg(2+) pocket. Residues arginine 47 and arginine 70 each coordinate DNA. Residue aspartate 86 coordinates Mg(2+). The interval 103–123 is disordered; it reads RRKEAQANLEEATEQGDTEQM. Residues 122–251 are I-domain; sequence QMEKFSRRLV…QKAYQLIKEH (130 aa). Residues glutamate 158, glutamate 160, aspartate 179, and aspartate 181 each coordinate Mg(2+). Glutamate 158 is a binding site for DNA. DNA contacts are provided by glycine 229 and aspartate 231. Residue aspartate 231 coordinates Mg(2+). The tract at residues 334-342 is interaction with PCNA; that stretch reads QQGRLDSFF.

The protein belongs to the XPG/RAD2 endonuclease family. FEN1 subfamily. As to quaternary structure, interacts with PCNA. Three molecules of FEN1 bind to one PCNA trimer with each molecule binding to one PCNA monomer. PCNA stimulates the nuclease activity without altering cleavage specificity. The cofactor is Mg(2+). Phosphorylated. Phosphorylation upon DNA damage induces relocalization to the nuclear plasma.

The protein resides in the nucleus. The protein localises to the nucleolus. Its subcellular location is the nucleoplasm. It localises to the mitochondrion. Structure-specific nuclease with 5'-flap endonuclease and 5'-3' exonuclease activities involved in DNA replication and repair. During DNA replication, cleaves the 5'-overhanging flap structure that is generated by displacement synthesis when DNA polymerase encounters the 5'-end of a downstream Okazaki fragment. It enters the flap from the 5'-end and then tracks to cleave the flap base, leaving a nick for ligation. Also involved in the long patch base excision repair (LP-BER) pathway, by cleaving within the apurinic/apyrimidinic (AP) site-terminated flap. Acts as a genome stabilization factor that prevents flaps from equilibrating into structures that lead to duplications and deletions. Also possesses 5'-3' exonuclease activity on nicked or gapped double-stranded DNA, and exhibits RNase H activity. Also involved in replication and repair of rDNA and in repairing mitochondrial DNA. The protein is Flap endonuclease 1 of Monosiga brevicollis (Choanoflagellate).